We begin with the raw amino-acid sequence, 396 residues long: Argininosuccinate synthase (396 aa).

An ATP-binding site is contributed by 9–17 (AFSGGLDTT). Tyr-86 lines the L-citrulline pocket. Gly-116 contributes to the ATP binding site. Residues Thr-118, Asn-122, and Asp-123 each contribute to the L-aspartate site. Asn-122 contacts L-citrulline. The L-citrulline site is built by Arg-126, Ser-172, Ser-181, Glu-254, and Tyr-266.

It belongs to the argininosuccinate synthase family. Type 1 subfamily. In terms of assembly, homotetramer.

Its subcellular location is the cytoplasm. It carries out the reaction L-citrulline + L-aspartate + ATP = 2-(N(omega)-L-arginino)succinate + AMP + diphosphate + H(+). Its pathway is amino-acid biosynthesis; L-arginine biosynthesis; L-arginine from L-ornithine and carbamoyl phosphate: step 2/3. The chain is Argininosuccinate synthase from Halobacterium salinarum (strain ATCC 700922 / JCM 11081 / NRC-1) (Halobacterium halobium).